Reading from the N-terminus, the 626-residue chain is Extracellular metalloproteinase 1 (626 aa).

A signal peptide spans M1–S17. The propeptide occupies H18–D241. N315 is a glycosylation site (N-linked (GlcNAc...) asparagine). H425 lines the Zn(2+) pocket. The active site involves E426. H429 lines the Zn(2+) pocket. The tract at residues G606 to C626 is disordered. The span at R610 to C626 shows a compositional bias: polar residues.

This sequence belongs to the peptidase M36 family. The cofactor is Zn(2+).

The protein localises to the secreted. Its function is as follows. Secreted metalloproteinase that allows assimilation of proteinaceous substrates. The polypeptide is Extracellular metalloproteinase 1 (MEP1) (Phaeosphaeria nodorum (strain SN15 / ATCC MYA-4574 / FGSC 10173) (Glume blotch fungus)).